The sequence spans 511 residues: Cytochrome P450 monooxygenase roqR (511 aa).

The N-terminal stretch at 1–23 (MSGYVLLTVQLAAVLLLVTLWRA) is a signal peptide. 3 N-linked (GlcNAc...) asparagine glycosylation sites follow: asparagine 364, asparagine 373, and asparagine 383. Cysteine 455 serves as a coordination point for heme.

The protein belongs to the cytochrome P450 family. Heme is required as a cofactor.

It participates in alkaloid biosynthesis. Cytochrome P450 monooxygenase; part of the gene cluster that mediates the biosynthesis of the mycotoxins roquefortine C and meleagrin. The first stage is catalyzed by the dipeptide synthase roqA which condenses histidine and tryptophan to produce histidyltryptophanyldiketopiperazine (HTD). HTD is then converted to roquefortine C through two possible pathways. In the first pathway, prenyltransferase roqD transforms HTD to the intermediate roquefortine D, which is in turn converted to roquefortine C by the cytochrome P450 monooxygenase roqR. In the second pathway, HTD is first converted to the intermediate dehydrohistidyltryptophanyldi-ketopiperazine (DHTD) by roqR which is then prenylated by roqD to form roquefortine C. Roquefortine C can be further transformed to meleagrin via three more reactions including oxydation to glandicolin A by roqM, which is further reduced to glandicoline B by roqO. Finally, glandicoline B is converted to meleagrin by the glandicoline B O-methyltransferase roqN. More studies identified further branching and additional metabolites produced by the roquefortine/meleagrin cluster, including roquefortine F, roquefortine L, roquefortine M, roquefortine N and neoxaline. The chain is Cytochrome P450 monooxygenase roqR from Penicillium rubens (strain ATCC 28089 / DSM 1075 / NRRL 1951 / Wisconsin 54-1255) (Penicillium chrysogenum).